We begin with the raw amino-acid sequence, 132 residues long: Hemoglobin heart muscle subunit alpha-type (132 aa).

The 132-residue stretch at 1–132 (GLSDSEKSAV…GEVGAILTSS (132 aa)) folds into the Globin domain. Residues histidine 58 and histidine 83 each coordinate heme b.

This sequence belongs to the globin family. Monomer.

In terms of biological role, this hemoglobin may replace myocardial myoglobin in this amphibian species. In Aquarana catesbeiana (American bullfrog), this protein is Hemoglobin heart muscle subunit alpha-type.